The following is an 88-amino-acid chain: MGGISIWQLLIIALIVVLLFGTKKLRSLGGDLGGAVKGFKNAMSSEEDKKALEDAEAAKPVQTAQTVQSAQPTQQATEKKPESNKEQA.

Residues 1–21 (MGGISIWQLLIIALIVVLLFG) traverse the membrane as a helical segment. Positions 43-88 (MSSEEDKKALEDAEAAKPVQTAQTVQSAQPTQQATEKKPESNKEQA) are disordered. The span at 46 to 57 (EEDKKALEDAEA) shows a compositional bias: basic and acidic residues. The span at 62–76 (QTAQTVQSAQPTQQA) shows a compositional bias: polar residues. A compositionally biased stretch (basic and acidic residues) spans 77–88 (TEKKPESNKEQA).

This sequence belongs to the TatA/E family. As to quaternary structure, the Tat system comprises two distinct complexes: a TatABC complex, containing multiple copies of TatA, TatB and TatC subunits, and a separate TatA complex, containing only TatA subunits. Substrates initially bind to the TatABC complex, which probably triggers association of the separate TatA complex to form the active translocon.

The protein resides in the cell inner membrane. Part of the twin-arginine translocation (Tat) system that transports large folded proteins containing a characteristic twin-arginine motif in their signal peptide across membranes. TatA could form the protein-conducting channel of the Tat system. The polypeptide is Sec-independent protein translocase protein TatA (Shewanella oneidensis (strain ATCC 700550 / JCM 31522 / CIP 106686 / LMG 19005 / NCIMB 14063 / MR-1)).